The chain runs to 540 residues: MMTTPELSCDVLIIGSGAAGLSLALRLAEKHKVIVLSKGPVSEGSTFYAQGGIAAVFDETDSIASHVEDTLIAGAGICDRHAVEFVASNARTCVQWLIDQGVLFDTHVQPNGKESYHLTREGGHSHRRILHAADATGKEVETTLVSRAQNHPNIQVLERSNAVDLIISDKMGLPGPRRVVGAWIWNRNKEWVETCHAKSVVLATGGASKVYQYTTNPDISSGDGIAMAWRAGCRVANLEFNQFHPTALYHPQARNFLLTEALRGEGAYLKRPDGSRFMPDVDERGELAPRDIVARAIDHEMKQLGADCMFLDISHKPDDFVRQHFPMIYAKLLDLGMDLTKEPIPVVPAAHYTCGGVVVDDYGRTDVDGLYAIGEVSYTGLHGANRMASNSLLECLVYGWSAAMDIDRRMPSVHSVDALPAWDESRVENADERVVIQHNWHELRLLMWDYVGIVRTTKRLERALRRITMLQQEIDEYYANFRVSNNLLELRNLVQVAELIVRCAMMRKESRGLHFTLDYPQQLAESGPSILSPLTPHINR.

FAD-binding positions include 16–19 (SGAA), K38, 45–52 (STFYAQGG), and D223. The active-site Proton donor/acceptor is the R290. FAD-binding positions include E375 and 391–392 (SL).

This sequence belongs to the FAD-dependent oxidoreductase 2 family. NadB subfamily. It depends on FAD as a cofactor.

The protein localises to the cytoplasm. It carries out the reaction L-aspartate + O2 = iminosuccinate + H2O2. It functions in the pathway cofactor biosynthesis; NAD(+) biosynthesis; iminoaspartate from L-aspartate (oxidase route): step 1/1. In terms of biological role, catalyzes the oxidation of L-aspartate to iminoaspartate, the first step in the de novo biosynthesis of NAD(+). In Salmonella typhimurium (strain LT2 / SGSC1412 / ATCC 700720), this protein is L-aspartate oxidase (nadB).